The primary structure comprises 544 residues: Chaperonin GroEL 3 (544 aa).

ATP contacts are provided by residues 30-33, lysine 51, 87-91, glycine 415, and aspartate 496; these read TLGP and DGTTT.

It belongs to the chaperonin (HSP60) family. Forms a cylinder of 14 subunits composed of two heptameric rings stacked back-to-back. Interacts with the co-chaperonin GroES.

The protein resides in the cytoplasm. It catalyses the reaction ATP + H2O + a folded polypeptide = ADP + phosphate + an unfolded polypeptide.. Its function is as follows. Together with its co-chaperonin GroES, plays an essential role in assisting protein folding. The GroEL-GroES system forms a nano-cage that allows encapsulation of the non-native substrate proteins and provides a physical environment optimized to promote and accelerate protein folding. This is Chaperonin GroEL 3 from Rhizobium meliloti (strain 1021) (Ensifer meliloti).